Reading from the N-terminus, the 1405-residue chain is ATP-dependent helicase/nuclease subunit A (1405 aa).

Residues arginine 7–arginine 482 form the UvrD-like helicase ATP-binding domain. ATP is bound at residue alanine 28–threonine 35. Residues proline 551–glycine 914 form the UvrD-like helicase C-terminal domain. 2 disordered regions span residues glutamine 778–proline 797 and alanine 1132–threonine 1165. The span at glycine 787 to valine 796 shows a compositional bias: low complexity.

Belongs to the helicase family. AddA subfamily. Heterodimer of AddA and AddB/RexB. The cofactor is Mg(2+).

The enzyme catalyses Couples ATP hydrolysis with the unwinding of duplex DNA by translocating in the 3'-5' direction.. The catalysed reaction is ATP + H2O = ADP + phosphate + H(+). The heterodimer acts as both an ATP-dependent DNA helicase and an ATP-dependent, dual-direction single-stranded exonuclease. Recognizes the chi site generating a DNA molecule suitable for the initiation of homologous recombination. The AddA nuclease domain is required for chi fragment generation; this subunit has the helicase and 3' -&gt; 5' nuclease activities. The sequence is that of ATP-dependent helicase/nuclease subunit A from Moorella thermoacetica (strain ATCC 39073 / JCM 9320).